We begin with the raw amino-acid sequence, 108 residues long: MSKAVLRFIRLSPTKARLIAREVQGMNAEEALAALEFMPNKAAKVISKVITSAVANGGYEPEEVVITSCRVDRGPYLKRFRPRARGRASRIMKPTSHVYVEVAQKKDS.

It belongs to the universal ribosomal protein uL22 family. As to quaternary structure, part of the 50S ribosomal subunit.

This protein binds specifically to 23S rRNA; its binding is stimulated by other ribosomal proteins, e.g. L4, L17, and L20. It is important during the early stages of 50S assembly. It makes multiple contacts with different domains of the 23S rRNA in the assembled 50S subunit and ribosome. In terms of biological role, the globular domain of the protein is located near the polypeptide exit tunnel on the outside of the subunit, while an extended beta-hairpin is found that lines the wall of the exit tunnel in the center of the 70S ribosome. The sequence is that of Large ribosomal subunit protein uL22 from Nitratiruptor sp. (strain SB155-2).